Here is a 490-residue protein sequence, read N- to C-terminus: Mitochondrial-processing peptidase subunit beta (490 aa).

The transit peptide at 1 to 46 (MAAAAVARAVLFSAARRRLCGFTERLLIGGAAGRSLYFGGNRLRST) directs the protein to the mitochondrion. His102 is a binding site for Zn(2+). Glu105 acts as the Proton acceptor in catalysis. Zn(2+)-binding residues include His106 and Glu182.

Belongs to the peptidase M16 family. In terms of assembly, heterodimer of PMPCA (alpha) and PMPCB (beta) subunits, forming the mitochondrial processing protease (MPP) in which PMPCA is involved in substrate recognition and binding and PMPCB is the catalytic subunit. Zn(2+) serves as cofactor.

The protein resides in the mitochondrion matrix. It carries out the reaction Release of N-terminal transit peptides from precursor proteins imported into the mitochondrion, typically with Arg in position P2.. Its activity is regulated as follows. Binding to PMPCA is required for catalytic activity. In terms of biological role, catalytic subunit of the essential mitochondrial processing protease (MPP), which cleaves the mitochondrial sequence off newly imported precursors proteins. Preferentially, cleaves after an arginine at position P2. Required for PINK1 turnover by coupling PINK1 mitochondrial import and cleavage, which results in subsequent PINK1 proteolysis. In Bos taurus (Bovine), this protein is Mitochondrial-processing peptidase subunit beta (PMPCB).